Consider the following 404-residue polypeptide: MSQSRYFFTSESVSEGHPDKVADQISDAVLDDFIRQDPNSRVACETFVTTGQVIVGGEVTTTGIVDVQKIARKVITEIGYTKGEYMFEANSCGVLSALHSQSADINRGVDRKEAIADEFDRVGAGDQGMMFGYACTETPELMPAAIQFAQQLVKVLADIRKAGKIMTYLRPDAKSQVTLEYVDEKVARVDAVVVSTQHDPEPAGMSEAEFQEVIKKDIIENVIKKVIPANLLDLNTKFHINPTGRFEIGGPHGDTGLTGRKIIVDTYGGAAPHGGGAFSGKDPSKVDRSAAYASRHVAKNIVAAGLAEKCTVQVSYAIGVARPVSIYINTHGTAMHGLSDEQIQEKAEKIFDLRPLAIIRRFSLDNPQGWCYQETAAYGHFGRDIFPWEKTEKVAELKTAFSLA.

His-17 contacts ATP. Asp-19 contacts Mg(2+). Glu-45 is a K(+) binding site. Glu-58 and Gln-101 together coordinate L-methionine. Residues 101-111 (QSADINRGVDR) are flexible loop. ATP is bound by residues 172–174 (DAK), 245–246 (RF), Asp-254, 260–261 (RK), Ala-277, and Lys-281. Asp-254 contacts L-methionine. Residue Lys-285 participates in L-methionine binding.

The protein belongs to the AdoMet synthase family. In terms of assembly, homotetramer; dimer of dimers. It depends on Mg(2+) as a cofactor. K(+) is required as a cofactor.

It localises to the cytoplasm. It carries out the reaction L-methionine + ATP + H2O = S-adenosyl-L-methionine + phosphate + diphosphate. Its pathway is amino-acid biosynthesis; S-adenosyl-L-methionine biosynthesis; S-adenosyl-L-methionine from L-methionine: step 1/1. In terms of biological role, catalyzes the formation of S-adenosylmethionine (AdoMet) from methionine and ATP. The overall synthetic reaction is composed of two sequential steps, AdoMet formation and the subsequent tripolyphosphate hydrolysis which occurs prior to release of AdoMet from the enzyme. The protein is S-adenosylmethionine synthase of Chlorobium luteolum (strain DSM 273 / BCRC 81028 / 2530) (Pelodictyon luteolum).